A 349-amino-acid polypeptide reads, in one-letter code: N-acetyltaurine hydrolase (349 aa).

The a divalent metal cation site is built by His-26, His-28, Glu-169, His-201, His-230, and Asp-298.

Belongs to the metallo-dependent hydrolases superfamily. Phosphotriesterase family. Requires a divalent metal cation as cofactor.

The protein resides in the cytoplasm. It is found in the cytosol. It catalyses the reaction N-acetyltaurine + H2O = taurine + acetate. The catalysed reaction is N-propanoyltaurine + H2O = propanoate + taurine. It carries out the reaction N-acetyl-L-methionine + H2O = L-methionine + acetate. The enzyme catalyses N-acetyl-L-isoleucine + H2O = L-isoleucine + acetate. It catalyses the reaction N-acetyl-L-leucine + H2O = L-leucine + acetate. The catalysed reaction is N-acetyl-L-valine + H2O = L-valine + acetate. N-acetyltaurine hydrolase that catalyzes the hydrolysis of N-acetyltaurine into taurine and acetate. PTER also acts on other N-acetyl amino acids (Met, Ile, Leu, Val) and N-propionyltaurine, but at lower rates. The sequence is that of N-acetyltaurine hydrolase (pter) from Danio rerio (Zebrafish).